The following is a 239-amino-acid chain: 4-hydroxy-tetrahydrodipicolinate reductase (239 aa).

NAD(+) contacts are provided by residues 8–13, 78–80, and 102–105; these read GSTGKM, GTT, and SANM. Histidine 134 functions as the Proton donor/acceptor in the catalytic mechanism. Histidine 135 is a (S)-2,3,4,5-tetrahydrodipicolinate binding site. The active-site Proton donor is lysine 138. Residue 144–145 participates in (S)-2,3,4,5-tetrahydrodipicolinate binding; that stretch reads GT.

This sequence belongs to the DapB family.

It is found in the cytoplasm. It catalyses the reaction (S)-2,3,4,5-tetrahydrodipicolinate + NAD(+) + H2O = (2S,4S)-4-hydroxy-2,3,4,5-tetrahydrodipicolinate + NADH + H(+). The enzyme catalyses (S)-2,3,4,5-tetrahydrodipicolinate + NADP(+) + H2O = (2S,4S)-4-hydroxy-2,3,4,5-tetrahydrodipicolinate + NADPH + H(+). The protein operates within amino-acid biosynthesis; L-lysine biosynthesis via DAP pathway; (S)-tetrahydrodipicolinate from L-aspartate: step 4/4. Catalyzes the conversion of 4-hydroxy-tetrahydrodipicolinate (HTPA) to tetrahydrodipicolinate. This chain is 4-hydroxy-tetrahydrodipicolinate reductase, found in Rickettsia africae (strain ESF-5).